A 219-amino-acid chain; its full sequence is uncharacterized protein (219 aa).

Positions 4–79 (GLRIIAENKI…YIIEIEEEES (76 aa)) constitute an ACT domain.

This is an uncharacterized protein from Archaeoglobus fulgidus (strain ATCC 49558 / DSM 4304 / JCM 9628 / NBRC 100126 / VC-16).